Here is a 180-residue protein sequence, read N- to C-terminus: Lysine-specific demethylase 5C (180 aa).

The disordered stretch occupies residues Pro-116–Gly-159. Ser-148 is modified (phosphoserine).

The protein belongs to the JARID1 histone demethylase family. In terms of assembly, part of two distinct complexes, one containing E2F6, and the other containing REST. Interacts with ZMYND8. The cofactor is Fe(2+).

The protein resides in the nucleus. The enzyme catalyses N(6),N(6),N(6)-trimethyl-L-lysyl(4)-[histone H3] + 3 2-oxoglutarate + 3 O2 = L-lysyl(4)-[histone H3] + 3 formaldehyde + 3 succinate + 3 CO2. Histone demethylase that specifically demethylates 'Lys-4' of histone H3, thereby playing a central role in histone code. Does not demethylate histone H3 'Lys-9', H3 'Lys-27', H3 'Lys-36', H3 'Lys-79' or H4 'Lys-20'. Demethylates trimethylated and dimethylated but not monomethylated H3 'Lys-4'. Participates in transcriptional repression of neuronal genes by recruiting histone deacetylases and REST at neuron-restrictive silencer elements. Represses the CLOCK-BMAL1 heterodimer-mediated transcriptional activation of the core clock component PER2. This is Lysine-specific demethylase 5C (KDM5C) from Cricetulus griseus (Chinese hamster).